The sequence spans 262 residues: MTNYGLVIDQERCIGCQSCSLTCKQENNVPMGQFWNRVLTQGGDHVDTPSGDYPEGGDGGTLEMTYQPTACQHCENAPCVKVCPVNATYTRDDGIVEIDYDKCMGCRYCMAACPYNARVFNWDEPEHRPEDGTGDVAERPQGVVEKCTFCSHRVEDGLDPACVVNCPADARIFGDLDDDDSTVSKYIAEYDTHQLLDEKGTDPSTYYINGEMSPGRPWKSKKLESELDDDEAAKAARRRSGSVENGYDVTPHVPAETAGGDD.

3 4Fe-4S ferredoxin-type domains span residues 4 to 34, 62 to 93, and 94 to 123; these read YGLV…MGQF, LEMT…TRDD, and GIVE…FNWD. [4Fe-4S] cluster contacts are provided by Cys-13, Cys-16, Cys-19, Cys-23, Cys-71, Cys-74, Cys-79, Cys-83, Cys-103, Cys-106, Cys-109, Cys-113, Cys-147, Cys-150, Cys-162, and Cys-166. Positions 209–262 are disordered; the sequence is NGEMSPGRPWKSKKLESELDDDEAAKAARRRSGSVENGYDVTPHVPAETAGGDD.

As to quaternary structure, probable multiprotein complex that likely consists of DmsA, DmsB and DmsC. The cofactor is [4Fe-4S] cluster.

It localises to the cell membrane. Its function is as follows. Dimethyl sulfoxide (DMSO) reductase catalyzes the reduction of dimethyl sulfoxide (DMSO) to dimethyl sulfide (DMS) during anaerobic respiration; it can also use trimethylamine N-oxide (TMAO) as terminal electron acceptor. Subunit B is proposed to be involved in electron transfer. The protein is Putative dimethyl sulfoxide reductase iron-sulfur subunit B (dmsB) of Halobacterium salinarum (strain ATCC 700922 / JCM 11081 / NRC-1) (Halobacterium halobium).